The primary structure comprises 360 residues: MRIFATEVQTINSFVRLESFKEVYGLIWEFLPIFSLVLGILTGVLVLVWLEREISARIQQRIGPEYAGALGILQALADGIKLLFKENLRPSIGNTTLFSIGPSIAVISILLSYSVIPFSNHLVLADFNIGIFLWIAISSIAPIGLLMSGYGSNNKYSFLGGLRAAAQSISYEIPLTLCLLSISLLSNSLSTVDIVEAQSKYGFWGWNLWRQPIGFIIFLISSLAECERLPFDLPEAEEELVAGYQTEYSGIKFGLFYVASYLNLLISSLFVTVLYLGGWNISIPYISILELFERDQIFGTTIGIFITLAKTYLFLFISITTRWTLPRLRIDQLLNFGWKFLLPISLGNLLLTTSFQVFSL.

A run of 8 helical transmembrane segments spans residues 30-50 (FLPIFSLVLGILTGVLVLVWL), 98-118 (FSIGPSIAVISILLSYSVIPF), 127-147 (FNIGIFLWIAISSIAPIGLLM), 165-185 (AAQSISYEIPLTLCLLSISLL), 203-223 (FWGWNLWRQPIGFIIFLISSL), 248-268 (YSGIKFGLFYVASYLNLLISS), 297-317 (IFGTTIGIFITLAKTYLFLFI), and 340-360 (FLLPISLGNLLLTTSFQVFSL).

Belongs to the complex I subunit 1 family. NDH is composed of at least 16 different subunits, 5 of which are encoded in the nucleus.

Its subcellular location is the plastid. The protein localises to the chloroplast thylakoid membrane. It catalyses the reaction a plastoquinone + NADH + (n+1) H(+)(in) = a plastoquinol + NAD(+) + n H(+)(out). It carries out the reaction a plastoquinone + NADPH + (n+1) H(+)(in) = a plastoquinol + NADP(+) + n H(+)(out). Its function is as follows. NDH shuttles electrons from NAD(P)H:plastoquinone, via FMN and iron-sulfur (Fe-S) centers, to quinones in the photosynthetic chain and possibly in a chloroplast respiratory chain. The immediate electron acceptor for the enzyme in this species is believed to be plastoquinone. Couples the redox reaction to proton translocation, and thus conserves the redox energy in a proton gradient. This chain is NAD(P)H-quinone oxidoreductase subunit 1, chloroplastic, found in Aethionema grandiflorum (Persian stone-cress).